A 150-amino-acid polypeptide reads, in one-letter code: Cdc42 effector protein 5 (150 aa).

3 disordered regions span residues 1–20 (MPVM…DRGA), 34–89 (LHVG…PADP), and 114–133 (SETT…QHPK). Residues 23–37 (ISAPLGDFRHTLHVG) enclose the CRIB domain. Arg38 bears the Omega-N-methylarginine mark. Pro residues-rich tracts occupy residues 55-66 (GPPPEPGAPPVV) and 74-87 (PAAP…PSPA). The span at 114-127 (SETTATKPDGDAHP) shows a compositional bias: basic and acidic residues.

This sequence belongs to the BORG/CEP family. In terms of assembly, interacts with CDC42 in a GTP-dependent manner, and with SEPT7. As to expression, highly expressed in the skeletal muscle.

It localises to the endomembrane system. Its subcellular location is the cytoplasm. It is found in the cytoskeleton. In terms of biological role, probably involved in the organization of the actin cytoskeleton. May act downstream of CDC42 to induce actin filament assembly leading to cell shape changes. Induces pseudopodia formation in fibroblasts. Inhibits MAPK8 independently of CDC42 binding. Controls septin organization and this effect is negatively regulated by CDC42. The polypeptide is Cdc42 effector protein 5 (Cdc42ep5) (Mus musculus (Mouse)).